We begin with the raw amino-acid sequence, 138 residues long: Low molecular weight protein-tyrosine-phosphatase PtpB (138 aa).

Cysteine 7 serves as the catalytic Nucleophile. Arginine 13 is an active-site residue. Aspartate 111 functions as the Proton donor in the catalytic mechanism.

The protein belongs to the low molecular weight phosphotyrosine protein phosphatase family.

It catalyses the reaction O-phospho-L-tyrosyl-[protein] + H2O = L-tyrosyl-[protein] + phosphate. In terms of biological role, dephosphorylates the phosphotyrosine-containing proteins. The polypeptide is Low molecular weight protein-tyrosine-phosphatase PtpB (ptpB) (Staphylococcus haemolyticus (strain JCSC1435)).